The primary structure comprises 450 residues: MDGSETSHSSGLNDFLLRSSVSSGSRSMDVIVYLINDEIIQLTVDGLSVITAHELHKSIREALQLPETAQDVFALWLISPFLEVQLKPKHQPYKVCRQWHDLLARFTNCSSNDILQDEPFLQFRRNIFFPKARELQIAHERTLYLLYEEAKYNVLDGRYPCDVEDCELLGGLACRLELGPYNQNEHTPATIRPKLDSLFPPYLCKKRNGFFTTFKNKGGRQASFEQTVLNTYKEVKESSACTEEQAMKNHYREYLKKCHELPYYGCAFFHGVVDKPAQGFLNRSGRKPVSVAINLEGVSVIDRKEKHILISLTYPELSWDHTYPDEEEHILWLEFDGDAEGTPVNKLLKIYSKQAELMSGLIEYCIELSQTTESPASDFLPGNSQLSEKRSKLRRQESVLCNRMKHLNTIDYVEDGASIKRVKPKRTASFFTRQNTHYSAVQPSETPTET.

The 346-residue stretch at 28 to 373 folds into the FERM domain; sequence MDVIVYLIND…YCIELSQTTE (346 aa).

It is found in the cytoplasm. Its subcellular location is the cytosol. The protein resides in the cell membrane. In terms of biological role, promotes the cell surface stability of RHBDF1 and RHBDF2 and prevents their degradation via the endolysosomal pathway. By acting on RHBDF proteins, involved in ADAM17-mediated ligand shedding. May negatively regulate Wnt signaling. This chain is FERM domain-containing protein 8 (frmd8), found in Xenopus tropicalis (Western clawed frog).